The following is a 1165-amino-acid chain: Immunoglobulin superfamily member 3 (1165 aa).

Residues 1–20 (MGTAAGLLLAALLLAGTSWA) form the signal peptide. Over 21 to 1095 (QREVNIQQGP…LQSTICANDA (1075 aa)) the chain is Extracellular. Ig-like C2-type domains lie at 22-139 (REVN…AKMN), 144-262 (PDTL…WFPL), 276-386 (PTDK…RGPS), 406-527 (PLRT…WQLL), 545-661 (FAVT…WTQL), 678-800 (PRLQ…EEAS), 810-934 (PDAN…WYKR), and 951-1067 (PALQ…WYLL). Cystine bridges form between C43-C121 and C168-C246. Positions 250–252 (EWI) match the EWI motif motif. Intrachain disulfides connect C302–C376, C432–C511, C566–C645, C701–C779, C835–C918, and C974–C1051. The chain crosses the membrane as a helical span at residues 1096–1116 (LFYLVFFYPFPIFGILIITIL). Topologically, residues 1117–1165 (LVRFRHRPTSKPGEGKNGVPLLWIKEPHLNYSPTCLEPPVLSIHPGTID) are cytoplasmic.

The protein localises to the membrane. The sequence is that of Immunoglobulin superfamily member 3 (igsf3) from Xenopus laevis (African clawed frog).